The chain runs to 133 residues: UPF0102 protein Plav_3586 (133 aa).

It belongs to the UPF0102 family.

The chain is UPF0102 protein Plav_3586 from Parvibaculum lavamentivorans (strain DS-1 / DSM 13023 / NCIMB 13966).